The chain runs to 76 residues: U-scoloptoxin(15)-Ssd3b (76 aa).

An N-terminal signal peptide occupies residues 1 to 23 (MEKKIIFLCFLVALLTFPEFISS).

Contains 2 disulfide bonds. As to expression, expressed by the venom gland.

It is found in the secreted. This Scolopendra dehaani (Thai centipede) protein is U-scoloptoxin(15)-Ssd3b.